Consider the following 229-residue polypeptide: MYDISGWKHVFKLDPNKELSEEHLEMICESGTDAVIVGGSDGVTIDNVLHMLVSIRRYAVPCVLEVSDVEAITPGFDFYYIPSVLNSRKVEWVTGVHHEALKEFGDIMDWDEIFMEGYCVLNPEAKVAQLTDAKCDVTEDDVIAYARLADKLLRLPIFYLEYSGTYGDVELVKNVKAQLKQAKLYYGGGISNAEQAKEMAQHADTVVVGNIIYDDIKAALKTVKAVKGE.

Residue K12 participates in sn-glycerol 1-phosphate binding. 2 residues coordinate Mg(2+): D14 and S40. Residues 159 to 164 (YLEYSG), G189, and 209 to 210 (GN) each bind sn-glycerol 1-phosphate.

Belongs to the GGGP/HepGP synthase family. Group I subfamily. In terms of assembly, homodimer. Mg(2+) is required as a cofactor.

The enzyme catalyses sn-glycerol 1-phosphate + all-trans-heptaprenyl diphosphate = 3-heptaprenyl-sn-glycero-1-phosphate + diphosphate. It functions in the pathway membrane lipid metabolism; glycerophospholipid metabolism. Prenyltransferase that catalyzes in vivo the transfer of the heptaprenyl moiety of heptaprenyl pyrophosphate (HepPP; 35 carbon atoms) to the C3 hydroxyl of sn-glycerol-1-phosphate (G1P), producing heptaprenylglyceryl phosphate (HepGP). This reaction is an ether-bond-formation step in the biosynthesis of archaea-type G1P-based membrane lipids found in Bacillales. This Bacillus cereus (strain ATCC 10987 / NRS 248) protein is Heptaprenylglyceryl phosphate synthase.